The sequence spans 114 residues: Iron-sulfur cluster insertion protein ErpA (114 aa).

The iron-sulfur cluster site is built by Cys42, Cys106, and Cys108.

The protein belongs to the HesB/IscA family. Homodimer. It depends on iron-sulfur cluster as a cofactor.

In terms of biological role, required for insertion of 4Fe-4S clusters for at least IspG. The protein is Iron-sulfur cluster insertion protein ErpA of Enterobacter sp. (strain 638).